Reading from the N-terminus, the 240-residue chain is DNA repair protein RecO (240 aa).

The protein belongs to the RecO family.

In terms of biological role, involved in DNA repair and RecF pathway recombination. This chain is DNA repair protein RecO, found in Xanthomonas euvesicatoria pv. vesicatoria (strain 85-10) (Xanthomonas campestris pv. vesicatoria).